A 297-amino-acid polypeptide reads, in one-letter code: uncharacterized protein (297 aa).

Residues 191-211 traverse the membrane as a helical segment; sequence VMIILSCSNITILAVLSIVGL. Residues 275–287 are compositionally biased toward polar residues; that stretch reads SKTSETQSVSGST. Residues 275–297 are disordered; that stretch reads SKTSETQSVSGSTHSDEKLTAPM. Residues 288-297 are compositionally biased toward basic and acidic residues; the sequence is HSDEKLTAPM.

The protein localises to the host membrane. This is an uncharacterized protein from Cryphonectria parasitica mycoreovirus 1 (strain 9B21) (CpMYRV-1).